The primary structure comprises 445 residues: Phosphoglucosamine mutase (445 aa).

S99 acts as the Phosphoserine intermediate in catalysis. The Mg(2+) site is built by S99, D242, D244, and D246. S99 carries the phosphoserine modification.

It belongs to the phosphohexose mutase family. It depends on Mg(2+) as a cofactor. Post-translationally, activated by phosphorylation.

The enzyme catalyses alpha-D-glucosamine 1-phosphate = D-glucosamine 6-phosphate. Catalyzes the conversion of glucosamine-6-phosphate to glucosamine-1-phosphate. In Helicobacter pylori (strain P12), this protein is Phosphoglucosamine mutase.